The chain runs to 387 residues: Succinate--CoA ligase [ADP-forming] subunit beta (387 aa).

ATP contacts are provided by residues Lys-46, 53-55 (GRG), Glu-99, Ala-102, and Glu-107. The Mg(2+) site is built by Asn-199 and Asp-213. Residues Asn-264 and 321–323 (GIV) contribute to the substrate site.

It belongs to the succinate/malate CoA ligase beta subunit family. In terms of assembly, heterotetramer of two alpha and two beta subunits. Mg(2+) is required as a cofactor.

The enzyme catalyses succinate + ATP + CoA = succinyl-CoA + ADP + phosphate. The catalysed reaction is GTP + succinate + CoA = succinyl-CoA + GDP + phosphate. The protein operates within carbohydrate metabolism; tricarboxylic acid cycle; succinate from succinyl-CoA (ligase route): step 1/1. Functionally, succinyl-CoA synthetase functions in the citric acid cycle (TCA), coupling the hydrolysis of succinyl-CoA to the synthesis of either ATP or GTP and thus represents the only step of substrate-level phosphorylation in the TCA. The beta subunit provides nucleotide specificity of the enzyme and binds the substrate succinate, while the binding sites for coenzyme A and phosphate are found in the alpha subunit. This is Succinate--CoA ligase [ADP-forming] subunit beta from Campylobacter jejuni subsp. jejuni serotype O:23/36 (strain 81-176).